The primary structure comprises 581 residues: Arginine--tRNA ligase (581 aa).

The short motif at 126–136 is the 'HIGH' region element; the sequence is PNLAKEMHVGH.

It belongs to the class-I aminoacyl-tRNA synthetase family. Monomer.

Its subcellular location is the cytoplasm. The catalysed reaction is tRNA(Arg) + L-arginine + ATP = L-arginyl-tRNA(Arg) + AMP + diphosphate. This is Arginine--tRNA ligase from Shewanella pealeana (strain ATCC 700345 / ANG-SQ1).